The following is a 427-amino-acid chain: Piwi protein (427 aa).

The tract at residues 38-167 is mid domain; the sequence is PYEVPSLKYN…VQFVSKLGGK (130 aa). The 297-residue stretch at 110 to 406 folds into the Piwi domain; it reads GIMLVLPEYN…VAGIIANVNR (297 aa). The segment at 118-124 is binds 5'-phosphorylated end of guide DNA; it reads YNTPLYY. Residues 147–148 form a binds target DNA region; sequence RN. A binds guide DNA region spans residues 150 to 155; the sequence is TFYVDN. Q159 and L427 together coordinate a divalent metal cation. The interval 168–427 is PIWI domain; the sequence is PWILNVDPEK…RSLQTNPWFL (260 aa).

It belongs to the argonaute family. Short pAgo subfamily. As to quaternary structure, homodimer probably stabilized by DNA. Each subunit is capable of interacting with a DNA molecule. It depends on a divalent metal cation as a cofactor.

Might play a role in defense against invading genetic elements, using short nucleic acid sequences as guides to bind complementary target strands, resulting in slicing of the target nucleic acid. Binds nucleic acids with decreasing affinity in the following order; ssDNA, ssRNA, dsDNA, RNA-DNA, RNA-RNA. Association of the 5' seed region of the guide strand (nucleotides 2-7) with AfPiwi increases affinity for the corresponding target strand; the greatest increase in affinity is for guide DNA with target RNA. The chain is Piwi protein from Archaeoglobus fulgidus (strain ATCC 49558 / DSM 4304 / JCM 9628 / NBRC 100126 / VC-16).